Reading from the N-terminus, the 673-residue chain is Potassium voltage-gated channel subfamily KQT member 1 (673 aa).

Disordered regions lie at residues 1 to 28 (MAAA…RGSA) and 61 to 80 (GPSS…LGPR). Over 1–118 (MAAATSPPRA…YNFLERPTGW (118 aa)) the chain is Cytoplasmic. Phosphoserine is present on serine 27. Positions 66 to 75 (AAPAASPAAA) are enriched in low complexity. Residues 119–140 (KCFVYHFAVFLIVLVCLIFSVL) traverse the membrane as a helical segment. The Extracellular segment spans residues 141 to 151 (STIEQYVALAT). A helical membrane pass occupies residues 152-174 (GTLFWMEIVLVVFFGTEYAVRLW). Over 175–190 (SAGCRSKYVGIWGRLR) the chain is Cytoplasmic. Residues 191-216 (FARKPISIIDLIVVVASMVVLCVGSK) traverse the membrane as a helical segment. The Extracellular portion of the chain corresponds to 217–224 (GQVFATSA). A helical; Voltage-sensor membrane pass occupies residues 225–240 (IRGIRFLQILRMLHVD). The segment at 236-244 (MLHVDRQGG) is interaction with KCNE3. Residues 241–258 (RQGGTWRLLGSVVFIHRQ) lie on the Cytoplasmic side of the membrane. A 1,2-diacyl-sn-glycero-3-phospho-(1D-myo-inositol-4,5-bisphosphate) is bound at residue glutamine 242. Residues 259–281 (ELITTLYIGFLGLIFSSYFVYLA) form a helical membrane-spanning segment. At 282 to 297 (EKDAVNESGQVEFGSY) the chain is on the extracellular side. Asparagine 287 carries N-linked (GlcNAc...) asparagine glycosylation. The pore-forming intramembrane region spans 298 to 318 (ADALWWGVVTVTTIGYGDKVP). Topologically, residues 319 to 320 (QT) are extracellular. The chain crosses the membrane as a helical span at residues 321–346 (WVGKTIASCFSVFAISFFALPAGILG). The Cytoplasmic segment spans residues 347–673 (SGFALKVQQK…VPGRGPEEGS (327 aa)). An interaction with CALM region spans residues 368–380 (AAASLIQTAWRCY). Phosphoserine occurs at positions 405 and 407. An interaction with CALM; calcium-dependent region spans residues 514 to 528 (KVIRRMQYFVAKKKF). Positions 534–571 (PYDVRDVIEQYSQGHLNLMVRIKELQRRLDQSIGRPAL) are interaction with KCNE1 C-terminus. An interaction with AKAP9 region spans residues 587–615 (IGARLNRVEDKVTQLDQRLELITDMLQQL). The C-terminal assembly domain (tetramerization) stretch occupies residues 588 to 619 (GARLNRVEDKVTQLDQRLELITDMLQQLLSLH). The interval 619 to 673 (HRGGTPGSRAPGGGGAQVAQPCSGGSINPELFLPSNALPTYEQLTVPGRGPEEGS) is disordered. A compositionally biased stretch (gly residues) spans 622-634 (GTPGSRAPGGGGA).

It belongs to the potassium channel family. KQT (TC 1.A.1.15) subfamily. Kv7.1/KCNQ1 sub-subfamily. As to quaternary structure, tetramer. Heterotetramer with KCNE1; targets to the membrane raft. Interacts (via C-terminus) with CALM; forms a heterooctameric structure (with 4:4 KCNQ1:CALM stoichiometry) in a calcium-independent manner. Interacts with AKAP9; targets protein kinase A (PKA) catalytic and regulatory subunits and protein phosphatase 1 (PP1) to the KCNQ1-KCNE1 complex, allowing PKA-mediated phosphorylation and increase of delayed rectifier potassium channel activity. Interacts with KCNE2; form a heterooligomer complex that targets to the membrane raft and leading to currents with an apparently instantaneous activation, a rapid deactivation process and a linear current-voltage relationship and decreases the amplitude of the outward current. Interacts with AP2M1; mediates estrogen-induced internalization via clathrin-coated vesicles. Interacts with NEDD4L; promotes internalization and decreases I(Ks) currents. Interacts with USP2; counteracts the NEDD4L-specific down-regulation of I(Ks) and restore plasma membrane localization. Heterotetramer with KCNQ5; has a voltage-gated potassium channel activity. Interacts with KCNE3; four KCNE3 molecules are bound to one KCNQ1 tetramer (4:4 KCNQ1:KCNE3 stoichiometry); alters membrane raft localization; affects KCNQ1 structure and gating properties. Interacts with KCNE4; impairs KCNQ1 localization in lipid rafts and inhibits voltage-gated potassium channel activity. Interacts with KCNE5; impairs KCNQ1 localization in lipid rafts and only conducts current upon strong and continued depolarization. Interacts with SLC5A3; forms coregulatory channel-transporter complexes that modulate Na(+)-coupled myo-inositol influx through the transporter. Ubiquitinated by NEDD4L; promotes internalization. The ubiquitinylated form is internalized through a clathrin-mediated endocytosis by interacting with AP2M1 and is recycled back to the cell membrane via RAB4A and RAB11A. In terms of processing, deubiquitinated by USP2; counteracts the NEDD4L-specific down-regulation of I(Ks) and restores the membrane localization.

The protein localises to the cell membrane. It localises to the cytoplasmic vesicle membrane. The protein resides in the early endosome. Its subcellular location is the membrane raft. It is found in the endoplasmic reticulum. The protein localises to the basolateral cell membrane. It localises to the apical cell membrane. It carries out the reaction K(+)(in) = K(+)(out). With respect to regulation, PIP2 molecule is essential to activate KCNQ channels by inducing the coupling of the voltage-sensing domain (VSD) and the pore-forming domain (PD). Upon channel activation, PIP2 disrupts the VSD-calmodulin/CALM interactions, causing the release of CALM from the VSD which triggers the opening of the gate. Calcium potentiates KCNQ1 channel current through calcium-bound CALM. Calcium-bound CALM competes with PIP2 to stabilize the channel open state. In terms of biological role, pore-forming subunit of the voltage-gated potassium (Kv) channel involved in the regulation of cardiomyocyte excitability and important in normal development and functions of myocardium, inner ear, stomach and colon. Associates with KCNE beta subunits that modulates current kinetics. Induces a voltage-dependent by rapidly activating and slowly deactivating potassium-selective outward current. Also promotes a delayed voltage activated potassium current showing outward rectification characteristic. During beta-adrenergic receptor stimulation participates in cardiac repolarization by associating with KCNE1 to form the I(Ks) cardiac potassium current that increases the amplitude and slows down the activation kinetics of outward potassium current I(Ks). Muscarinic agonist oxotremorine-M strongly suppresses KCNQ1/KCNE1 current. When associated with KCNE3, forms the potassium channel that is important for cyclic AMP-stimulated intestinal secretion of chloride ions. This interaction with KCNE3 is reduced by 17beta-estradiol, resulting in the reduction of currents. During conditions of increased substrate load, maintains the driving force for proximal tubular and intestinal sodium ions absorption, gastric acid secretion, and cAMP-induced jejunal chloride ions secretion. Allows the provision of potassium ions to the luminal membrane of the secretory canaliculus in the resting state as well as during stimulated acid secretion. When associated with KCNE2, forms a heterooligomer complex leading to currents with an apparently instantaneous activation, a rapid deactivation process and a linear current-voltage relationship and decreases the amplitude of the outward current. When associated with KCNE4, inhibits voltage-gated potassium channel activity. When associated with KCNE5, this complex only conducts current upon strong and continued depolarization. Also forms a heterotetramer with KCNQ5 that has a voltage-gated potassium channel activity. Binds with phosphatidylinositol 4,5-bisphosphate. KCNQ1-KCNE2 channel associates with Na(+)-coupled myo-inositol symporter in the apical membrane of choroid plexus epithelium and regulates the myo-inositol gradient between blood and cerebrospinal fluid with an impact on neuron excitability. This is Potassium voltage-gated channel subfamily KQT member 1 from Sus scrofa (Pig).